The primary structure comprises 189 residues: MPKVSDTDLAERKVEILSGARHCFATYGYDGATVARLEETIGKSRGAIFHHYGNKDQLFLEVAHEDMRKMAELAADEGLIGAIRTLVKSNDLTDWWGMRVEITRRVNIDPCFAAKWELDQLALRETVRTRLREQRASGRIRKDVEIETIAQTLELVLEGVLGRLAQRQGTEGLSDALDFVESALRSPGH.

An HTH tetR-type domain is found at 10–70 (AERKVEILSG…EVAHEDMRKM (61 aa)). Residues 33–52 (TVARLEETIGKSRGAIFHHY) constitute a DNA-binding region (H-T-H motif). Citrate is bound by residues 79 to 80 (LI), R130, and Q134. Position 181 (E181) interacts with Mg(2+). R185 provides a ligand contact to citrate.

In terms of assembly, homodimer.

Its function is as follows. AcnR negatively controls the expression of the aconitase gene acn. The protein is HTH-type transcriptional repressor AcnR of Corynebacterium jeikeium (strain K411).